A 198-amino-acid chain; its full sequence is ATP-dependent Clp protease proteolytic subunit (198 aa).

The active-site Nucleophile is the serine 101. The active site involves histidine 126.

It belongs to the peptidase S14 family. In terms of assembly, component of the chloroplastic Clp protease core complex.

The protein localises to the plastid. It localises to the chloroplast stroma. The catalysed reaction is Hydrolysis of proteins to small peptides in the presence of ATP and magnesium. alpha-casein is the usual test substrate. In the absence of ATP, only oligopeptides shorter than five residues are hydrolyzed (such as succinyl-Leu-Tyr-|-NHMec, and Leu-Tyr-Leu-|-Tyr-Trp, in which cleavage of the -Tyr-|-Leu- and -Tyr-|-Trp bonds also occurs).. Functionally, cleaves peptides in various proteins in a process that requires ATP hydrolysis. Has a chymotrypsin-like activity. Plays a major role in the degradation of misfolded proteins. In Solanum bulbocastanum (Wild potato), this protein is ATP-dependent Clp protease proteolytic subunit.